Reading from the N-terminus, the 392-residue chain is GTPase Obg (392 aa).

The Obg domain maps to 1 to 159; it reads MKFVDEAEIR…RNLKLELMLL (159 aa). Residues 121-146 form a disordered region; sequence GFHGLGNTRFKSSTNRAPRQKTNGTP. The span at 129–145 shows a compositional bias: polar residues; the sequence is RFKSSTNRAPRQKTNGT. In terms of domain architecture, OBG-type G spans 160 to 333; that stretch reads ADVGLLGMPN…LCNDVMDFIE (174 aa). GTP contacts are provided by residues 166-173, 191-195, 213-216, 283-286, and 314-316; these read GMPNAGKS, FTTLV, DIPG, NKVD, and SAF. The Mg(2+) site is built by S173 and T193.

The protein belongs to the TRAFAC class OBG-HflX-like GTPase superfamily. OBG GTPase family. As to quaternary structure, monomer. It depends on Mg(2+) as a cofactor.

Its subcellular location is the cytoplasm. An essential GTPase which binds GTP, GDP and possibly (p)ppGpp with moderate affinity, with high nucleotide exchange rates and a fairly low GTP hydrolysis rate. Plays a role in control of the cell cycle, stress response, ribosome biogenesis and in those bacteria that undergo differentiation, in morphogenesis control. The sequence is that of GTPase Obg from Alteromonas mediterranea (strain DSM 17117 / CIP 110805 / LMG 28347 / Deep ecotype).